A 284-amino-acid chain; its full sequence is Nucleotide-binding protein NMA0948 (284 aa).

Position 8–15 (8–15 (GLSGSGKS)) interacts with ATP. 58–61 (DVRS) is a binding site for GTP.

Belongs to the RapZ-like family.

In terms of biological role, displays ATPase and GTPase activities. The protein is Nucleotide-binding protein NMA0948 of Neisseria meningitidis serogroup A / serotype 4A (strain DSM 15465 / Z2491).